The primary structure comprises 150 residues: 3-dehydroquinate dehydratase (150 aa).

Tyr26 functions as the Proton acceptor in the catalytic mechanism. Residues Asn77, His83, and Asp90 each coordinate substrate. The active-site Proton donor is His103. Residues 104–105 and Arg114 contribute to the substrate site; that span reads LS.

It belongs to the type-II 3-dehydroquinase family. In terms of assembly, homododecamer.

It catalyses the reaction 3-dehydroquinate = 3-dehydroshikimate + H2O. The protein operates within metabolic intermediate biosynthesis; chorismate biosynthesis; chorismate from D-erythrose 4-phosphate and phosphoenolpyruvate: step 3/7. In terms of biological role, catalyzes a trans-dehydration via an enolate intermediate. This Klebsiella pneumoniae (strain 342) protein is 3-dehydroquinate dehydratase.